A 258-amino-acid polypeptide reads, in one-letter code: tRNA pseudouridine synthase A (258 aa).

D53 serves as the catalytic Nucleophile. Y111 is a substrate binding site.

It belongs to the tRNA pseudouridine synthase TruA family. As to quaternary structure, homodimer.

The enzyme catalyses uridine(38/39/40) in tRNA = pseudouridine(38/39/40) in tRNA. Functionally, formation of pseudouridine at positions 38, 39 and 40 in the anticodon stem and loop of transfer RNAs. The chain is tRNA pseudouridine synthase A from Streptococcus agalactiae serotype V (strain ATCC BAA-611 / 2603 V/R).